The following is a 64-amino-acid chain: Large ribosomal subunit protein bL35 (64 aa).

This sequence belongs to the bacterial ribosomal protein bL35 family.

The protein is Large ribosomal subunit protein bL35 of Shewanella sediminis (strain HAW-EB3).